Consider the following 159-residue polypeptide: Small ribosomal subunit protein uS7c (159 aa).

The segment at 137–159 (HAIRKKEETHKMAESNRAXAHYR) is disordered. Residues 141-150 (KKEETHKMAE) show a composition bias toward basic and acidic residues.

This sequence belongs to the universal ribosomal protein uS7 family. Part of the 30S ribosomal subunit.

It is found in the plastid. Its subcellular location is the chloroplast. One of the primary rRNA binding proteins, it binds directly to 16S rRNA where it nucleates assembly of the head domain of the 30S subunit. The chain is Small ribosomal subunit protein uS7c (rps7) from Sciadopitys verticillata (Japanese umbrella-pine).